The sequence spans 297 residues: Cytidine deaminase (297 aa).

CMP/dCMP-type deaminase domains are found at residues 50-170 (SDKE…FGPK) and 189-297 (ETES…YASL). 91 to 93 (NME) is a binding site for substrate. Residue His104 participates in Zn(2+) binding. Glu106 (proton donor) is an active-site residue. Residues Cys131 and Cys134 each contribute to the Zn(2+) site.

It belongs to the cytidine and deoxycytidylate deaminase family. In terms of assembly, homodimer. Requires Zn(2+) as cofactor.

The catalysed reaction is cytidine + H2O + H(+) = uridine + NH4(+). The enzyme catalyses 2'-deoxycytidine + H2O + H(+) = 2'-deoxyuridine + NH4(+). Its function is as follows. This enzyme scavenges exogenous and endogenous cytidine and 2'-deoxycytidine for UMP synthesis. The protein is Cytidine deaminase of Aliivibrio fischeri (strain ATCC 700601 / ES114) (Vibrio fischeri).